Consider the following 447-residue polypeptide: Serine/threonine-protein phosphatase 2A 55 kDa regulatory subunit B gamma isoform (447 aa).

7 WD repeats span residues 22–61 (TEAD…KNAP), 87–128 (EIEE…KRPE), 171–209 (GHTY…RSFN), 220–260 (DLTE…LCDK), 279–317 (EIIS…RPIE), 334–375 (ESDC…DVTL), and 410–446 (DFTK…NSDM).

Belongs to the phosphatase 2A regulatory subunit B family. As to quaternary structure, PP2A consists of a common heterodimeric core enzyme, composed of a 36 kDa catalytic subunit (subunit C) and a 65 kDa constant regulatory subunit (PR65 or subunit A), that associates with a variety of regulatory subunits. Proteins that associate with the core dimer include three families of regulatory subunits B (the R2/B/PR55/B55, R3/B''/PR72/PR130/PR59 and R5/B'/B56 families), the 48 kDa variable regulatory subunit, viral proteins, and cell signaling molecules. Interacts with IER5. Highly expressed in brain.

In terms of biological role, the B regulatory subunit might modulate substrate selectivity and catalytic activity, and might also direct the localization of the catalytic enzyme to a particular subcellular compartment. The chain is Serine/threonine-protein phosphatase 2A 55 kDa regulatory subunit B gamma isoform (Ppp2r2c) from Rattus norvegicus (Rat).